Reading from the N-terminus, the 1134-residue chain is ATP-dependent helicase/deoxyribonuclease subunit B (1134 aa).

ATP is bound at residue 8-15 (GRAGSGKS). 4 residues coordinate [4Fe-4S] cluster: C771, C1089, C1092, and C1098.

It belongs to the helicase family. AddB/RexB type 1 subfamily. As to quaternary structure, heterodimer of AddA and AddB. Requires Mg(2+) as cofactor. [4Fe-4S] cluster serves as cofactor.

The heterodimer acts as both an ATP-dependent DNA helicase and an ATP-dependent, dual-direction single-stranded exonuclease. Recognizes the chi site generating a DNA molecule suitable for the initiation of homologous recombination. The AddB subunit has 5' -&gt; 3' nuclease activity but not helicase activity. The polypeptide is ATP-dependent helicase/deoxyribonuclease subunit B (Clostridium novyi (strain NT)).